A 570-amino-acid polypeptide reads, in one-letter code: Urease subunit alpha (570 aa).

A Urease domain is found at 132–570; it reads GGIDTHVHFL…VPMARRYFLF (439 aa). Ni(2+) is bound by residues H137, H139, and K220. Residue K220 is modified to N6-carboxylysine. H222 contributes to the substrate binding site. H249 and H275 together coordinate Ni(2+). H323 functions as the Proton donor in the catalytic mechanism. D363 is a binding site for Ni(2+).

The protein belongs to the metallo-dependent hydrolases superfamily. Urease alpha subunit family. As to quaternary structure, heterotrimer of UreA (gamma), UreB (beta) and UreC (alpha) subunits. Three heterotrimers associate to form the active enzyme. It depends on Ni cation as a cofactor. In terms of processing, carboxylation allows a single lysine to coordinate two nickel ions.

The protein localises to the cytoplasm. The enzyme catalyses urea + 2 H2O + H(+) = hydrogencarbonate + 2 NH4(+). The protein operates within nitrogen metabolism; urea degradation; CO(2) and NH(3) from urea (urease route): step 1/1. The sequence is that of Urease subunit alpha from Corynebacterium glutamicum (strain ATCC 13032 / DSM 20300 / JCM 1318 / BCRC 11384 / CCUG 27702 / LMG 3730 / NBRC 12168 / NCIMB 10025 / NRRL B-2784 / 534).